Reading from the N-terminus, the 203-residue chain is Imidazoleglycerol-phosphate dehydratase (203 aa).

The protein belongs to the imidazoleglycerol-phosphate dehydratase family.

The protein localises to the cytoplasm. It catalyses the reaction D-erythro-1-(imidazol-4-yl)glycerol 3-phosphate = 3-(imidazol-4-yl)-2-oxopropyl phosphate + H2O. It participates in amino-acid biosynthesis; L-histidine biosynthesis; L-histidine from 5-phospho-alpha-D-ribose 1-diphosphate: step 6/9. The sequence is that of Imidazoleglycerol-phosphate dehydratase from Salinispora arenicola (strain CNS-205).